Reading from the N-terminus, the 140-residue chain is Large ribosomal subunit protein uL16 (140 aa).

Belongs to the universal ribosomal protein uL16 family. Part of the 50S ribosomal subunit.

In terms of biological role, binds 23S rRNA and is also seen to make contacts with the A and possibly P site tRNAs. This Amoebophilus asiaticus (strain 5a2) protein is Large ribosomal subunit protein uL16.